The sequence spans 426 residues: Glutamate-1-semialdehyde 2,1-aminomutase (426 aa).

An N6-(pyridoxal phosphate)lysine modification is found at Lys-265.

Belongs to the class-III pyridoxal-phosphate-dependent aminotransferase family. HemL subfamily. Homodimer. It depends on pyridoxal 5'-phosphate as a cofactor.

It localises to the cytoplasm. It catalyses the reaction (S)-4-amino-5-oxopentanoate = 5-aminolevulinate. Its pathway is porphyrin-containing compound metabolism; protoporphyrin-IX biosynthesis; 5-aminolevulinate from L-glutamyl-tRNA(Glu): step 2/2. This Paraburkholderia phymatum (strain DSM 17167 / CIP 108236 / LMG 21445 / STM815) (Burkholderia phymatum) protein is Glutamate-1-semialdehyde 2,1-aminomutase.